A 142-amino-acid polypeptide reads, in one-letter code: MKTFVAKPETVKRDWYVVDATGKTLGRLATELARRLRGKHKAEYTPHVDTGDYIIVINADKVAVTGRKETDKLYYWHTGYVGGIKQATFKEMIARRPEAVIEIAVKGMLPKGPLGRAMFRKLKVYAGAEHQHAAQQPQVLDI.

Belongs to the universal ribosomal protein uL13 family. Part of the 50S ribosomal subunit.

Its function is as follows. This protein is one of the early assembly proteins of the 50S ribosomal subunit, although it is not seen to bind rRNA by itself. It is important during the early stages of 50S assembly. This Haemophilus influenzae (strain 86-028NP) protein is Large ribosomal subunit protein uL13.